Consider the following 339-residue polypeptide: tRNA dimethylallyltransferase (339 aa).

Position 36–43 (36–43 (GPTGSGKT)) interacts with ATP. 38–43 (TGSGKT) contributes to the substrate binding site. Residues 61 to 64 (DSMQ) are interaction with substrate tRNA.

Belongs to the IPP transferase family. As to quaternary structure, monomer. Requires Mg(2+) as cofactor.

It carries out the reaction adenosine(37) in tRNA + dimethylallyl diphosphate = N(6)-dimethylallyladenosine(37) in tRNA + diphosphate. Catalyzes the transfer of a dimethylallyl group onto the adenine at position 37 in tRNAs that read codons beginning with uridine, leading to the formation of N6-(dimethylallyl)adenosine (i(6)A). The protein is tRNA dimethylallyltransferase of Chlamydia trachomatis serovar A (strain ATCC VR-571B / DSM 19440 / HAR-13).